We begin with the raw amino-acid sequence, 200 residues long: Imidazoleglycerol-phosphate dehydratase (200 aa).

The protein belongs to the imidazoleglycerol-phosphate dehydratase family.

It is found in the cytoplasm. It carries out the reaction D-erythro-1-(imidazol-4-yl)glycerol 3-phosphate = 3-(imidazol-4-yl)-2-oxopropyl phosphate + H2O. The protein operates within amino-acid biosynthesis; L-histidine biosynthesis; L-histidine from 5-phospho-alpha-D-ribose 1-diphosphate: step 6/9. This chain is Imidazoleglycerol-phosphate dehydratase, found in Renibacterium salmoninarum (strain ATCC 33209 / DSM 20767 / JCM 11484 / NBRC 15589 / NCIMB 2235).